Reading from the N-terminus, the 164-residue chain is MDMDAKQAVIAKLDELKINYTLIEHDPVYTIEEMEKIDIENVDYIVKNLFLRDAKGRQHYLVVADKDQKIDLKTLQDKIGSTKLSFASEDRLQKYLKLTKGAVSPFGVLNDETAEVEVVFDKNLVGRSCVAVHPNDNSATVVLSYEDLEKIVKANGNTFKAIEL.

The protein belongs to the PRORSD1 family.

Its subcellular location is the cytoplasm. Functionally, functions in trans to edit the amino acid moiety from incorrectly charged Ala-tRNA(Pro). Has weak activity on correctly charged tRNA(Ala), tRNA(Gly) as well as tRNA(Cys), tRNA(Met), tRNA(Pro), tRNA(Ser) and tRNA(Leu). The chain is Prolyl-tRNA editing protein ProX (proX) from Acetoanaerobium sticklandii (strain ATCC 12662 / DSM 519 / JCM 1433 / CCUG 9281 / NCIMB 10654 / HF) (Clostridium sticklandii).